The primary structure comprises 461 residues: tRNA modification GTPase MnmE (461 aa).

Lys-32, Glu-89, and Lys-128 together coordinate (6S)-5-formyl-5,6,7,8-tetrahydrofolate. In terms of domain architecture, TrmE-type G spans 224–387; the sequence is GHALSIVGKP…LSQKISEFFP (164 aa). Asn-234 is a binding site for K(+). GTP is bound by residues 234–239, 253–259, and 278–281; these read NAGKSS, SDIKGTT, and DTAG. Ser-238 lines the Mg(2+) pocket. Ser-253, Ile-255, and Thr-258 together coordinate K(+). Thr-259 is a binding site for Mg(2+). Lys-461 contributes to the (6S)-5-formyl-5,6,7,8-tetrahydrofolate binding site.

It belongs to the TRAFAC class TrmE-Era-EngA-EngB-Septin-like GTPase superfamily. TrmE GTPase family. Homodimer. Heterotetramer of two MnmE and two MnmG subunits. It depends on K(+) as a cofactor.

It localises to the cytoplasm. In terms of biological role, exhibits a very high intrinsic GTPase hydrolysis rate. Involved in the addition of a carboxymethylaminomethyl (cmnm) group at the wobble position (U34) of certain tRNAs, forming tRNA-cmnm(5)s(2)U34. The sequence is that of tRNA modification GTPase MnmE from Helicobacter pylori (strain J99 / ATCC 700824) (Campylobacter pylori J99).